Consider the following 333-residue polypeptide: D-fructose 1,6-bisphosphatase class 2/sedoheptulose 1,7-bisphosphatase (333 aa).

Residues Asp33, Glu57, Asp85, and Glu88 each coordinate Mn(2+). Substrate is bound by residues 88 to 90 (EGT), Tyr119, 164 to 166 (RTR), and 186 to 188 (DGD). Glu213 is a Mn(2+) binding site.

It belongs to the FBPase class 2 family. Homotetramer. The cofactor is Mn(2+).

The enzyme catalyses beta-D-fructose 1,6-bisphosphate + H2O = beta-D-fructose 6-phosphate + phosphate. It carries out the reaction D-sedoheptulose 1,7-bisphosphate + H2O = D-sedoheptulose 7-phosphate + phosphate. Its pathway is carbohydrate biosynthesis; Calvin cycle. Functionally, catalyzes the hydrolysis of fructose 1,6-bisphosphate (Fru 1,6-P2) and sedoheptulose 1,7-bisphosphate (Sed 1,7-P2) to fructose 6-phosphate and sedoheptulose 7-phosphate, respectively. This is D-fructose 1,6-bisphosphatase class 2/sedoheptulose 1,7-bisphosphatase from Prochlorococcus marinus (strain MIT 9312).